We begin with the raw amino-acid sequence, 302 residues long: Proline dehydrogenase 1 (302 aa).

Substrate is bound at residue Lys-95. Residue Asp-129 is part of the active site. FAD-binding residues include Met-130 and Gln-158. Residue Arg-179 is part of the active site. Residues 182-184 (KGA) and 221-222 (TH) contribute to the FAD site. Residue 283 to 284 (RR) coordinates substrate.

The protein belongs to the proline dehydrogenase family. It depends on FAD as a cofactor.

The enzyme catalyses L-proline + a quinone = (S)-1-pyrroline-5-carboxylate + a quinol + H(+). It functions in the pathway amino-acid degradation; L-proline degradation into L-glutamate; L-glutamate from L-proline: step 1/2. Converts proline to delta-1-pyrroline-5-carboxylate. In Bacillus subtilis (strain 168), this protein is Proline dehydrogenase 1 (fadM).